Here is an 89-residue protein sequence, read N- to C-terminus: ATP synthase subunit H, mitochondrial (89 aa).

F-type ATP synthases have 2 components, the catalytic core F(1) and the membrane-embedded component F(0), linked together by a central stalk and a peripheral stalk. The central stalk, also called rotor shaft, is often seen as part of F(1). The peripheral stalk is seen as part of F(0). F(0) contains the membrane channel next to the rotor. F-type ATP synthases form dimers but each monomer functions independently in ATP generation. The dimer consists of 18 different polypeptides: ATP1 (subunit alpha, part of F(1), 3 molecules per monomer), ATP2 (subunit beta, part of F(1), 3 molecules per monomer), ATP3 (subunit gamma, part of the central stalk), ATP4 (subunit b, part of the peripheral stalk), ATP5/OSCP (subunit 5/OSCP, part of the peripheral stalk), ATP6 (subunit a, part of the peripheral stalk), ATP7 (subunit d, part of the peripheral stalk), ATP8 (subunit 8, part of the peripheral stalk), OLI1 (subunit c, part of the rotor, 10 molecules per monomer), ATP14 (subunit H, part of the peripheral stalk), ATP15 (subunit epsilon, part of the central stalk), ATP16 (subunit delta, part of the central stalk), ATP17 (subunit f, part of the peripheral stalk), ATP18 (subunit i/j, part of the peripheral stalk). Dimer-specific subunits are ATP19 (subunit k, at interface between monomers), ATP20 (subunit g, at interface between monomers), TIM11 (subunit e, at interface between monomers). Also contains subunit L.

The protein localises to the mitochondrion inner membrane. Mitochondrial membrane ATP synthase (F(1)F(0) ATP synthase or Complex V) produces ATP from ADP in the presence of a proton gradient across the membrane which is generated by electron transport complexes of the respiratory chain. F-type ATP synthases consist of two structural domains, F(1) - containing the extramembraneous catalytic core, and F(0) - containing the membrane proton channel, linked together by a central stalk and a peripheral stalk. During catalysis, ATP synthesis in the catalytic domain of F(1) is coupled via a rotary mechanism of the central stalk subunits to proton translocation. Part of the peripheral stalk. The chain is ATP synthase subunit H, mitochondrial from Pichia angusta (Yeast).